A 360-amino-acid polypeptide reads, in one-letter code: uncharacterized protein (360 aa).

The next 6 helical transmembrane spans lie at 12 to 32 (ILPLLIIVTFSVTSIVWITQI), 52 to 72 (VVLVLPTLLFILLPIITVIAV), 96 to 116 (IQLALPALYVALTIMLLAYYI), 278 to 298 (IIWPLYNFVLPCLALAVFLRY), 306 to 326 (FMPVLFSALTVLFVTAIHFIL), and 336 to 356 (FIFACYFNLLVALTIGLYLLV).

Its subcellular location is the cell membrane. This is an uncharacterized protein from Rickettsia prowazekii (strain Madrid E).